The primary structure comprises 532 residues: Carboxypeptidase Y (532 aa).

A signal peptide spans 1 to 20 (MKAFTSLLCGLGLSTTLAKA). Residues 21–111 (ISLQRPLGLD…AIENYQLRVN (91 aa)) constitute a propeptide, mediates translocation across the endoplasmic reticulum, renders the enzyme inactive during transit, and targets the molecule to the vacuole. Residues 24-27 (QRPL) carry the Vacuolar targeting signal motif. Asn-124 and Asn-198 each carry an N-linked (GlcNAc...) (high mannose) asparagine glycan. 5 disulfides stabilise this stretch: Cys-167–Cys-409, Cys-304–Cys-318, Cys-328–Cys-351, Cys-335–Cys-344, and Cys-373–Cys-379. The active site involves Ser-257. Asn-279 is a glycosylation site (N-linked (GlcNAc...) (high mannose) asparagine). The active site involves Asp-449. Cys-452 contributes to the substrate binding site. N-linked (GlcNAc...) (high mannose) asparagine glycosylation occurs at Asn-479. His-508 is a catalytic residue. Met-509 is a substrate binding site.

The protein belongs to the peptidase S10 family. Post-translationally, enters the endoplasmic reticulum as an inactive zymogen and is modified by four N-linked core oligosaccharides, giving rise to a precursor known as P1 (67 kDa). As P1 transits through the Golgi, extension of its core oligosaccharides leads to the Golgi-modified P2 precursor (69 kDa). P2 is sorted away from secretory proteins at or beyond a late Golgi compartment and is subsequently delivered to the vacuole via a prevacuolar endosome-like compartment. Upon arrival in the vacuole, the N-terminal prosegment of P2 is cleaved by vacuolar proteases to yield the enzymatically active mature vacuolar form of CPY (61 kDa). In terms of processing, the four high mannose core N-glycans found in mature CPY are Man(11-15)GlcNAc(2) at Asn-124, Man(8-12)GlcNAc(2) at Asn-198, Man(9-14)GlcNAc(2) at Asn-279 and phosphorylated Man(12-17)GlcNAc(2) as well as Man(11-16)GlcNAc(2) at Asn-479.

It is found in the vacuole lumen. It carries out the reaction Release of a C-terminal amino acid with broad specificity.. With respect to regulation, inhibited by ZPCK. Functionally, vacuolar serine-type carboxypeptidase involved in degradation of small peptides. Digests preferentially peptides containing an aliphatic or hydrophobic residue in P1' position, as well as methionine, leucine or phenylalanine in P1 position of ester substrate. Also plays a role in breakdown of the autophagic body and the autophagosome-dependent protein synthesis. Plays a key role in phytochelatin (PC) synthesis from glutathione (GSH) by cleaving the Gly from GSH and form the PC-peptides of the structure (gamma-Glu-Cys)2-Gly. Also involved in resistance to xenobiotics via the degradation of glutathione-S-conjugates. This is Carboxypeptidase Y from Saccharomyces cerevisiae (strain ATCC 204508 / S288c) (Baker's yeast).